A 690-amino-acid chain; its full sequence is UvrABC system protein B (690 aa).

Residues 30–188 (QGVMDGQTNQ…QELISLHFVR (159 aa)) form the Helicase ATP-binding domain. 43–50 (GVTGSGKT) serves as a coordination point for ATP. The Beta-hairpin signature appears at 96-119 (YYDFYQPEAYIPTMDKYIAKDLKI). A Helicase C-terminal domain is found at 435-601 (QIDDLLEEIR…SIVKSVDQVL (167 aa)). The UVR domain maps to 641-676 (YAMAEELRLEMQEAAESMEFEKAAYLRDEVTKLEDA).

This sequence belongs to the UvrB family. As to quaternary structure, forms a heterotetramer with UvrA during the search for lesions. Interacts with UvrC in an incision complex.

The protein localises to the cytoplasm. Its function is as follows. The UvrABC repair system catalyzes the recognition and processing of DNA lesions. A damage recognition complex composed of 2 UvrA and 2 UvrB subunits scans DNA for abnormalities. Upon binding of the UvrA(2)B(2) complex to a putative damaged site, the DNA wraps around one UvrB monomer. DNA wrap is dependent on ATP binding by UvrB and probably causes local melting of the DNA helix, facilitating insertion of UvrB beta-hairpin between the DNA strands. Then UvrB probes one DNA strand for the presence of a lesion. If a lesion is found the UvrA subunits dissociate and the UvrB-DNA preincision complex is formed. This complex is subsequently bound by UvrC and the second UvrB is released. If no lesion is found, the DNA wraps around the other UvrB subunit that will check the other stand for damage. This is UvrABC system protein B from Chlorobium phaeobacteroides (strain BS1).